A 643-amino-acid polypeptide reads, in one-letter code: Fructose-1,6-bisphosphatase class 3 (643 aa).

Belongs to the FBPase class 3 family. Requires Mn(2+) as cofactor.

It catalyses the reaction beta-D-fructose 1,6-bisphosphate + H2O = beta-D-fructose 6-phosphate + phosphate. It participates in carbohydrate biosynthesis; gluconeogenesis. This is Fructose-1,6-bisphosphatase class 3 from Lacticaseibacillus paracasei (strain ATCC 334 / BCRC 17002 / CCUG 31169 / CIP 107868 / KCTC 3260 / NRRL B-441) (Lactobacillus paracasei).